The primary structure comprises 137 residues: Putative pre-16S rRNA nuclease (137 aa).

Belongs to the YqgF nuclease family.

It localises to the cytoplasm. Could be a nuclease involved in processing of the 5'-end of pre-16S rRNA. This is Putative pre-16S rRNA nuclease from Bacillus cereus (strain G9842).